A 356-amino-acid polypeptide reads, in one-letter code: Tyrosine recombinase XerS (356 aa).

A Core-binding (CB) domain is found at 16–121 (IMPWYVLDYY…ALSSLYKYLT (106 aa)). One can recognise a Tyr recombinase domain in the interval 169–354 (AFLDYVDKEY…VNDEQKTALD (186 aa)). Active-site residues include arginine 210, lysine 234, histidine 306, arginine 309, and histidine 332. Tyrosine 341 acts as the O-(3'-phospho-DNA)-tyrosine intermediate in catalysis.

The protein belongs to the 'phage' integrase family. XerS subfamily.

It is found in the cytoplasm. With respect to regulation, ftsK is required for recombination. In terms of biological role, site-specific tyrosine recombinase, which acts by catalyzing the cutting and rejoining of the recombining DNA molecules. Essential to convert dimers of the bacterial chromosome into monomers to permit their segregation at cell division. The chain is Tyrosine recombinase XerS from Streptococcus pyogenes serotype M12 (strain MGAS9429).